The sequence spans 262 residues: Type III pantothenate kinase (262 aa).

9-16 (DIGNTNVK) is a binding site for ATP. Residues tyrosine 103 and 110–113 (GADR) contribute to the substrate site. Catalysis depends on aspartate 112, which acts as the Proton acceptor. K(+) is bound at residue aspartate 134. Threonine 137 lines the ATP pocket. Threonine 190 lines the substrate pocket.

Belongs to the type III pantothenate kinase family. As to quaternary structure, homodimer. It depends on NH4(+) as a cofactor. Requires K(+) as cofactor.

The protein resides in the cytoplasm. It carries out the reaction (R)-pantothenate + ATP = (R)-4'-phosphopantothenate + ADP + H(+). It participates in cofactor biosynthesis; coenzyme A biosynthesis; CoA from (R)-pantothenate: step 1/5. Functionally, catalyzes the phosphorylation of pantothenate (Pan), the first step in CoA biosynthesis. This is Type III pantothenate kinase from Nitratidesulfovibrio vulgaris (strain DSM 19637 / Miyazaki F) (Desulfovibrio vulgaris).